We begin with the raw amino-acid sequence, 201 residues long: NADH-quinone oxidoreductase subunit C (201 aa).

The protein belongs to the complex I 30 kDa subunit family. NDH-1 is composed of 14 different subunits. Subunits NuoB, C, D, E, F, and G constitute the peripheral sector of the complex.

It is found in the cell inner membrane. The enzyme catalyses a quinone + NADH + 5 H(+)(in) = a quinol + NAD(+) + 4 H(+)(out). In terms of biological role, NDH-1 shuttles electrons from NADH, via FMN and iron-sulfur (Fe-S) centers, to quinones in the respiratory chain. The immediate electron acceptor for the enzyme in this species is believed to be ubiquinone. Couples the redox reaction to proton translocation (for every two electrons transferred, four hydrogen ions are translocated across the cytoplasmic membrane), and thus conserves the redox energy in a proton gradient. The sequence is that of NADH-quinone oxidoreductase subunit C from Sinorhizobium medicae (strain WSM419) (Ensifer medicae).